The chain runs to 232 residues: Methylthioribulose-1-phosphate dehydratase (232 aa).

Cys91 provides a ligand contact to substrate. Zn(2+) contacts are provided by His109, His111, and His191.

It belongs to the aldolase class II family. MtnB subfamily. The cofactor is Zn(2+).

It is found in the cytoplasm. It carries out the reaction 5-(methylsulfanyl)-D-ribulose 1-phosphate = 5-methylsulfanyl-2,3-dioxopentyl phosphate + H2O. It participates in amino-acid biosynthesis; L-methionine biosynthesis via salvage pathway; L-methionine from S-methyl-5-thio-alpha-D-ribose 1-phosphate: step 2/6. Catalyzes the dehydration of methylthioribulose-1-phosphate (MTRu-1-P) into 2,3-diketo-5-methylthiopentyl-1-phosphate (DK-MTP-1-P). The polypeptide is Methylthioribulose-1-phosphate dehydratase (Schizosaccharomyces japonicus (strain yFS275 / FY16936) (Fission yeast)).